The chain runs to 256 residues: Protein FixA (256 aa).

The protein belongs to the ETF beta-subunit/FixA family. In terms of assembly, heterodimer of FixA and FixB.

It functions in the pathway amine and polyamine metabolism; carnitine metabolism. Functionally, required for anaerobic carnitine reduction. May bring reductant to CaiA. The polypeptide is Protein FixA (Salmonella dublin (strain CT_02021853)).